Here is an 870-residue protein sequence, read N- to C-terminus: Probable disease resistance protein At1g59620 (870 aa).

The NB-ARC domain occupies 123–432; the sequence is DKRNMRQTFS…AAEGMPRPRY (310 aa). Position 167-174 (167-174) interacts with ATP; it reads GMGGIGKT. 6 LRR repeats span residues 543 to 567, 568 to 590, 703 to 726, 735 to 758, 759 to 786, and 808 to 833; these read LQLM…IGLL, IHLR…MQNL, MSGI…IYMP, PWHL…ILEK, LLQL…GFPQ, and MPRL…KFIT.

This sequence belongs to the disease resistance NB-LRR family.

Its function is as follows. Probable disease resistance protein. The protein is Probable disease resistance protein At1g59620 of Arabidopsis thaliana (Mouse-ear cress).